The following is a 153-amino-acid chain: Fimbrial protein EcpC (153 aa).

Residues 1–8 constitute a propeptide, leader sequence; sequence MLKQVQKG. Position 9 is an N-methylphenylalanine (F9). A helical transmembrane segment spans residues 9–29; it reads FTLIELMIVIAIIGILAAIAL. C130 and C143 are disulfide-bonded.

This sequence belongs to the N-Me-Phe pilin family.

The protein localises to the fimbrium. It is found in the membrane. This Eikenella corrodens protein is Fimbrial protein EcpC (ecpC).